A 253-amino-acid chain; its full sequence is 5'/3'-nucleotidase SurE (253 aa).

A divalent metal cation-binding residues include Asp8, Asp9, Ser39, and Asn92.

This sequence belongs to the SurE nucleotidase family. A divalent metal cation is required as a cofactor.

It localises to the cytoplasm. The enzyme catalyses a ribonucleoside 5'-phosphate + H2O = a ribonucleoside + phosphate. It carries out the reaction a ribonucleoside 3'-phosphate + H2O = a ribonucleoside + phosphate. It catalyses the reaction [phosphate](n) + H2O = [phosphate](n-1) + phosphate + H(+). Its function is as follows. Nucleotidase with a broad substrate specificity as it can dephosphorylate various ribo- and deoxyribonucleoside 5'-monophosphates and ribonucleoside 3'-monophosphates with highest affinity to 3'-AMP. Also hydrolyzes polyphosphate (exopolyphosphatase activity) with the preference for short-chain-length substrates (P20-25). Might be involved in the regulation of dNTP and NTP pools, and in the turnover of 3'-mononucleotides produced by numerous intracellular RNases (T1, T2, and F) during the degradation of various RNAs. In Salmonella paratyphi B (strain ATCC BAA-1250 / SPB7), this protein is 5'/3'-nucleotidase SurE.